The following is an 882-amino-acid chain: Bifunctional heparan sulfate N-deacetylase/N-sulfotransferase 1 (882 aa).

Residues 1-17 (MPALACLRRLCRHLSPQ) are Cytoplasmic-facing. Positions 1–169 (MPALACLRRL…VAYGVGIIGF (169 aa)) are sufficient for localization to Golgi membrane. Residues 18–38 (AVLFLLFVFCLFSVFVSAYYL) form a helical; Signal-anchor for type II membrane protein membrane-spanning segment. The Lumenal portion of the chain corresponds to 39-882 (YGWNRGLEPS…WLREDLQNTR (844 aa)). The segment at 40-598 (GWNRGLEPSA…KRHKDIWSKE (559 aa)) is heparan sulfate N-deacetylase 1. 3 N-linked (GlcNAc...) asparagine glycosylation sites follow: N231, N351, and N401. The heparan sulfate N-sulfotransferase 1 stretch occupies residues 599–882 (KTCDRFPKLL…WLREDLQNTR (284 aa)). The active-site For sulfotransferase activity is K614. Residue 614–618 (KTGTT) coordinates adenosine 3',5'-bisphosphate. N667 carries N-linked (GlcNAc...) asparagine glycosylation. Adenosine 3',5'-bisphosphate-binding residues include S712 and W817. An intrachain disulfide couples C818 to C828. 833-837 (KGRKY) is an adenosine 3',5'-bisphosphate binding site.

Belongs to the sulfotransferase 1 family. NDST subfamily. Monomer. Interacts with heparan sulfate co-polymerase subunits EXT1 and EXT2. Widely expressed in adult and throughout development.

The protein localises to the golgi apparatus membrane. It localises to the golgi apparatus. The protein resides in the trans-Golgi network membrane. It is found in the cis-Golgi network membrane. The enzyme catalyses N-acetyl-alpha-D-glucosaminyl-[heparan sulfate](n) + H2O = alpha-D-glucosaminyl-[heparan sulfate](n) + acetate. The catalysed reaction is alpha-D-glucosaminyl-[heparan sulfate](n) + 3'-phosphoadenylyl sulfate = N-sulfo-alpha-D-glucosaminyl-[heparan sulfate](n) + adenosine 3',5'-bisphosphate + 2 H(+). Its pathway is glycan metabolism; heparan sulfate biosynthesis. It functions in the pathway glycan metabolism; heparin biosynthesis. Its activity is regulated as follows. Inhibited by long N-sulfated sequences (more than 6 sugar residues) accumulating in its substrates heparan sulfate, and heparin. In terms of biological role, essential bifunctional enzyme that catalyzes both the N-deacetylation and the N-sulfation of glucosamine (GlcNAc) of the glycosaminoglycan in heparan sulfate. Modifies the GlcNAc-GlcA disaccharide repeating sugar backbone to make N-sulfated heparosan, a prerequisite substrate for later modifications in heparin biosynthesis. Plays a role in determining the extent and pattern of sulfation of heparan sulfate. Participates in biosynthesis of heparan sulfate that can ultimately serve as L-selectin ligands, thereby playing a role in inflammatory response. Required for the exosomal release of SDCBP, CD63 and syndecan. This chain is Bifunctional heparan sulfate N-deacetylase/N-sulfotransferase 1, found in Mus musculus (Mouse).